The chain runs to 427 residues: MSSIVVVGTQWGDEGKGKITDFLAEQSDVIARFSGGNNAGHTIQFGGETYKLHLVPSGIFYKDKLAVIGNGVVVDPVALLKELDGLNERGIPTSNLRISNRAQVILPYHLAQDEYEERLRGDNKIGTTKKGIGPAYVDKVQRIGIRMADLLEKETFERLLKSNIEYKQAYFKGMFNETCPSFDDIFEEYYAAGQRLKEFVTDTSKILDDAFVADEKVLFEGAQGVMLDIDHGTYPFVTSSNPIAGNVTVGTGVGPTFVSKVIGVCKAYTSRVGDGPFPTELFDEDGHHIREVGREYGTTTGRPRRVGWFDSVVLRHSRRVSGITDLSINSIDVLTGLDTVKICTAYELDGKEITEYPANLDQLKRCKPIFEELPGWTEDVTNVRTLEELPENARKYLERISELCNVQISIFSVGPDREQTNLLKELW.

Residues 12–18 (GDEGKGK) and 40–42 (GHT) contribute to the GTP site. The active-site Proton acceptor is Asp-13. The Mg(2+) site is built by Asp-13 and Gly-40. IMP-binding positions include 13 to 16 (DEGK), 38 to 41 (NAGH), Thr-128, Arg-142, Gln-223, Thr-238, and Arg-302. Catalysis depends on His-41, which acts as the Proton donor. Position 298–304 (298–304 (TTTGRPR)) interacts with substrate. Residues Arg-304, 330 to 332 (SID), and 412 to 414 (SVG) contribute to the GTP site.

Belongs to the adenylosuccinate synthetase family. Homodimer. Mg(2+) is required as a cofactor.

The protein resides in the cytoplasm. It carries out the reaction IMP + L-aspartate + GTP = N(6)-(1,2-dicarboxyethyl)-AMP + GDP + phosphate + 2 H(+). The protein operates within purine metabolism; AMP biosynthesis via de novo pathway; AMP from IMP: step 1/2. Plays an important role in the de novo pathway of purine nucleotide biosynthesis. Catalyzes the first committed step in the biosynthesis of AMP from IMP. This chain is Adenylosuccinate synthetase, found in Staphylococcus aureus (strain MW2).